A 189-amino-acid polypeptide reads, in one-letter code: MSKLAAFNFQQWIDEHQHLLKPPVGNVQIWENTDMMVTVVGGPNQRTDFHDDPVEEFFYQLKGDMVLKIIEEGKCHDLFIREGDIFFLPPHVRHSPQRPMPGSIGLVIEPKRPEGAKDAFEWYCFKCDGLVHRVEVLLKSIVRDLPPIYQAFYQDEQARTCPQCGELHPGKEPPQGWVTLLENKEQDKS.

Residue R46 coordinates O2. 3 residues coordinate Fe cation: H50, E56, and H94. E56 is a substrate binding site. 2 residues coordinate substrate: R98 and E109. Residues C124, C127, C161, and C164 each contribute to the Fe cation site.

This sequence belongs to the 3-HAO family. As to quaternary structure, homodimer. It depends on Fe(2+) as a cofactor.

The enzyme catalyses 3-hydroxyanthranilate + O2 = (2Z,4Z)-2-amino-3-carboxymuconate 6-semialdehyde. The protein operates within cofactor biosynthesis; NAD(+) biosynthesis; quinolinate from L-kynurenine: step 3/3. In terms of biological role, catalyzes the oxidative ring opening of 3-hydroxyanthranilate to 2-amino-3-carboxymuconate semialdehyde, which spontaneously cyclizes to quinolinate. The protein is 3-hydroxyanthranilate 3,4-dioxygenase of Shewanella woodyi (strain ATCC 51908 / MS32).